Consider the following 235-residue polypeptide: Probable Ni/Fe-hydrogenase 1 B-type cytochrome subunit (235 aa).

At 1-19 the chain is on the cytoplasmic side; sequence MQQKSDNVVSHYVFEAPVR. A helical membrane pass occupies residues 20–40; it reads IWHWLTVLCMAVLMVTGYFIG. Topologically, residues 41–63 are periplasmic; the sequence is KPLPSVSGEATYLFYMGYIRLIH. The helical transmembrane segment at 64 to 84 threads the bilayer; sequence FSAGMVFTVVLLMRIYWAFVG. At 85–130 the chain is on the cytoplasmic side; sequence NRYSRELFIVPVWRKSWWQGVWYEIRWYLFLAKRPSADIGHNPIAQ. The chain crosses the membrane as a helical span at residues 131–151; sequence AAMFGYFLMSVFMIITGFALY. The Periplasmic portion of the chain corresponds to 152–185; that stretch reads SEHSQYAIFAPFRYVVEFFYWTGGNSMDIHSWHR. The helical transmembrane segment at 186–203 threads the bilayer; that stretch reads LGMWLIGAFVIGHVYMAL. Topologically, residues 204–235 are cytoplasmic; sequence REDIMSDDTVISTMVNGYRSHKFGKISNKERS.

It belongs to the HupC/HyaC/HydC family.

The protein resides in the cell inner membrane. In terms of biological role, probable b-type cytochrome. This chain is Probable Ni/Fe-hydrogenase 1 B-type cytochrome subunit (hyaC), found in Escherichia coli O157:H7.